The primary structure comprises 428 residues: Enolase (428 aa).

(2R)-2-phosphoglycerate is bound at residue Gln163. Catalysis depends on Glu205, which acts as the Proton donor. 3 residues coordinate Mg(2+): Asp242, Glu285, and Asp312. (2R)-2-phosphoglycerate-binding residues include Lys337, Arg366, Ser367, and Lys388. Lys337 (proton acceptor) is an active-site residue.

It belongs to the enolase family. Mg(2+) is required as a cofactor.

It localises to the cytoplasm. Its subcellular location is the secreted. It is found in the cell surface. It catalyses the reaction (2R)-2-phosphoglycerate = phosphoenolpyruvate + H2O. It functions in the pathway carbohydrate degradation; glycolysis; pyruvate from D-glyceraldehyde 3-phosphate: step 4/5. Functionally, catalyzes the reversible conversion of 2-phosphoglycerate (2-PG) into phosphoenolpyruvate (PEP). It is essential for the degradation of carbohydrates via glycolysis. This chain is Enolase, found in Carboxydothermus hydrogenoformans (strain ATCC BAA-161 / DSM 6008 / Z-2901).